A 482-amino-acid polypeptide reads, in one-letter code: Cobyric acid synthase (482 aa).

The region spanning 243–430 (ACKVVVPQLE…LHGLFTSDAF (188 aa)) is the GATase cobBQ-type domain. C325 functions as the Nucleophile in the catalytic mechanism. The active site involves H422.

This sequence belongs to the CobB/CobQ family. CobQ subfamily.

The protein operates within cofactor biosynthesis; adenosylcobalamin biosynthesis. Catalyzes amidations at positions B, D, E, and G on adenosylcobyrinic A,C-diamide. NH(2) groups are provided by glutamine, and one molecule of ATP is hydrogenolyzed for each amidation. This is Cobyric acid synthase from Ruegeria sp. (strain TM1040) (Silicibacter sp.).